Reading from the N-terminus, the 397-residue chain is Enoyl-[acyl-carrier-protein] reductase [NADH] (397 aa).

Residues 48 to 53 (GASTGY), 74 to 75 (FE), 111 to 112 (DA), and 139 to 140 (AA) contribute to the NAD(+) site. Tyr-225 contacts substrate. Tyr-235 serves as the catalytic Proton donor. NAD(+) contacts are provided by residues Lys-244 and 273–275 (VVT).

Belongs to the TER reductase family. As to quaternary structure, monomer.

The catalysed reaction is a 2,3-saturated acyl-[ACP] + NAD(+) = a (2E)-enoyl-[ACP] + NADH + H(+). It functions in the pathway lipid metabolism; fatty acid biosynthesis. Its function is as follows. Involved in the final reduction of the elongation cycle of fatty acid synthesis (FAS II). Catalyzes the reduction of a carbon-carbon double bond in an enoyl moiety that is covalently linked to an acyl carrier protein (ACP). In Burkholderia pseudomallei (strain 1710b), this protein is Enoyl-[acyl-carrier-protein] reductase [NADH].